The chain runs to 170 residues: Glycine cleavage system H protein, mitochondrial (170 aa).

The transit peptide at 1–45 (MSLRVVRSVRAVACSLRIALASCPPRPWAPSAAAVRSLRTGSALL) directs the protein to the mitochondrion. A Lipoyl-binding domain is found at 63-145 (IGTVGISNFA…YEDGWLIKMT (83 aa)). Lysine 104 bears the N6-lipoyllysine mark.

This sequence belongs to the GcvH family. As to quaternary structure, the glycine cleavage system is composed of four proteins: P (GLDC), T (GCST), L (DLD) and H (GCSH). Interacts with GLDC. It depends on (R)-lipoate as a cofactor.

The protein resides in the mitochondrion. The glycine cleavage system catalyzes the degradation of glycine. The H protein (GCSH) shuttles the methylamine group of glycine from the P protein (GLDC) to the T protein (GCST). Has a pivotal role in the lipoylation of enzymes involved in cellular energetics such as the mitochondrial dihydrolipoyllysine-residue acetyltransferase component of pyruvate dehydrogenase complex (DLAT), and the mitochondrial dihydrolipoyllysine-residue succinyltransferase component of 2-oxoglutarate dehydrogenase complex (DLST). This is Glycine cleavage system H protein, mitochondrial from Rattus norvegicus (Rat).